Consider the following 208-residue polypeptide: Protein-L-isoaspartate O-methyltransferase (208 aa).

The active site involves S59.

It belongs to the methyltransferase superfamily. L-isoaspartyl/D-aspartyl protein methyltransferase family.

The protein localises to the cytoplasm. It catalyses the reaction [protein]-L-isoaspartate + S-adenosyl-L-methionine = [protein]-L-isoaspartate alpha-methyl ester + S-adenosyl-L-homocysteine. Its function is as follows. Catalyzes the methyl esterification of L-isoaspartyl residues in peptides and proteins that result from spontaneous decomposition of normal L-aspartyl and L-asparaginyl residues. It plays a role in the repair and/or degradation of damaged proteins. This Aliivibrio fischeri (strain MJ11) (Vibrio fischeri) protein is Protein-L-isoaspartate O-methyltransferase.